Here is a 140-residue protein sequence, read N- to C-terminus: Large ribosomal subunit protein uL16 (140 aa).

The protein belongs to the universal ribosomal protein uL16 family. As to quaternary structure, part of the 50S ribosomal subunit.

Binds 23S rRNA and is also seen to make contacts with the A and possibly P site tRNAs. The chain is Large ribosomal subunit protein uL16 from Syntrophus aciditrophicus (strain SB).